The primary structure comprises 166 residues: Phosphopantetheine adenylyltransferase (166 aa).

Residue Ser-11 participates in substrate binding. ATP contacts are provided by residues 11 to 12 (SF) and His-19. Positions 43, 80, and 94 each coordinate substrate. ATP-binding positions include 95 to 97 (GLR), Glu-105, and 130 to 136 (VRTVTAT).

It belongs to the bacterial CoaD family. Homohexamer. It depends on Mg(2+) as a cofactor.

It is found in the cytoplasm. The enzyme catalyses (R)-4'-phosphopantetheine + ATP + H(+) = 3'-dephospho-CoA + diphosphate. It participates in cofactor biosynthesis; coenzyme A biosynthesis; CoA from (R)-pantothenate: step 4/5. In terms of biological role, reversibly transfers an adenylyl group from ATP to 4'-phosphopantetheine, yielding dephospho-CoA (dPCoA) and pyrophosphate. The polypeptide is Phosphopantetheine adenylyltransferase (Chelativorans sp. (strain BNC1)).